The primary structure comprises 360 residues: Viral protein TPX (360 aa).

A disordered region spans residues T269–T289. The stretch at V270–T291 is one Thr-Pro(N) repeat. Residues S275–T289 are compositionally biased toward pro residues. The segment at P278–T353 is 3 Thr-Pro repeats regions and two near identical repeats. A repeat spans Y292–V301. Residues T302–T322 form a Thr-Pro(N) repeat. Positions Y323–V332 form a repeat. A disordered region spans residues V332–I360. A Thr-Pro(N) repeat occupies T333–T353. Positions S335–T351 are enriched in pro residues.

The sequence is that of Viral protein TPX from Thermoproteus tenax (TTV1).